Consider the following 151-residue polypeptide: Flagellar assembly factor FliW (151 aa).

This sequence belongs to the FliW family. Interacts with translational regulator CsrA and flagellin(s).

It is found in the cytoplasm. Functionally, acts as an anti-CsrA protein, binds CsrA and prevents it from repressing translation of its target genes, one of which is flagellin. Binds to flagellin and participates in the assembly of the flagellum. This is Flagellar assembly factor FliW from Halalkalibacterium halodurans (strain ATCC BAA-125 / DSM 18197 / FERM 7344 / JCM 9153 / C-125) (Bacillus halodurans).